The following is a 260-amino-acid chain: Exosome complex component Rrp42 (260 aa).

This sequence belongs to the RNase PH family. Rrp42 subfamily. As to quaternary structure, component of the archaeal exosome complex. Forms a hexameric ring-like arrangement composed of 3 Rrp41-Rrp42 heterodimers. The hexameric ring associates with a trimer of Rrp4 and/or Csl4 subunits.

It is found in the cytoplasm. Non-catalytic component of the exosome, which is a complex involved in RNA degradation. Contributes to the structuring of the Rrp41 active site. This is Exosome complex component Rrp42 from Thermoplasma volcanium (strain ATCC 51530 / DSM 4299 / JCM 9571 / NBRC 15438 / GSS1).